The sequence spans 1384 residues: RRP12-like protein (1384 aa).

The segment covering 1-13 has biased composition (basic residues); sequence MGKFRSKLKRNGK. The disordered stretch occupies residues 1–32; sequence MGKFRSKLKRNGKGKTWSRGESATSNPTQMKH. Residues 19 to 29 show a composition bias toward polar residues; that stretch reads RGESATSNPTQ. Phosphoserine is present on residues Ser-82, Ser-85, Ser-96, Ser-1094, Ser-1095, Ser-1117, and Ser-1119. Disordered stretches follow at residues 1082–1102, 1114–1155, and 1176–1384; these read LRKK…LVSG, LADS…IRED, and SAQT…KKYK. Composition is skewed to acidic residues over residues 1090-1099 and 1114-1127; these read AQEDSSDDEL and LADS…DMDA. Residues 1176–1191 are compositionally biased toward polar residues; that stretch reads SAQTATPAQSQKTKAQ. Phosphoserine occurs at positions 1221, 1225, 1227, 1230, 1250, and 1251. Polar residues-rich tracts occupy residues 1276–1285 and 1297–1315; these read SGKTTASSRY and TAGN…TSRP. Over residues 1321–1334 the composition is skewed to basic and acidic residues; that stretch reads GSKKAKGDMKKSGK. Residues 1348–1362 show a composition bias toward basic residues; the sequence is LNKRKRSMNSRKFKS. Over residues 1369–1378 the composition is skewed to gly residues; sequence AENGGAGGGR.

This sequence belongs to the RRP12 family.

Its subcellular location is the nucleus. This is RRP12-like protein from Drosophila melanogaster (Fruit fly).